Here is a 704-residue protein sequence, read N- to C-terminus: Elongation factor G (704 aa).

One can recognise a tr-type G domain in the interval 10 to 290 (NKVRNIGIMA…AVIDYLPSPL (281 aa)). GTP contacts are provided by residues 19–26 (AHIDAGKT), 83–87 (DTPGH), and 137–140 (NKMD).

Belongs to the TRAFAC class translation factor GTPase superfamily. Classic translation factor GTPase family. EF-G/EF-2 subfamily.

It localises to the cytoplasm. Its function is as follows. Catalyzes the GTP-dependent ribosomal translocation step during translation elongation. During this step, the ribosome changes from the pre-translocational (PRE) to the post-translocational (POST) state as the newly formed A-site-bound peptidyl-tRNA and P-site-bound deacylated tRNA move to the P and E sites, respectively. Catalyzes the coordinated movement of the two tRNA molecules, the mRNA and conformational changes in the ribosome. This Clavibacter sepedonicus (Clavibacter michiganensis subsp. sepedonicus) protein is Elongation factor G.